An 891-amino-acid chain; its full sequence is MATTAAGRLFSLELLVDWVRLETGLSPCAASPAVAFRLLDFPPLLVFPPAAPGPEPQRGAISFGRGKACLLRLHPAALRRPRLRAALLQLPVGPTSAPGLVGACDILLVPSLGQRGVFALRGPEAERVGELALFYRLTELGRFSPGVPQLRGPLSPACILDSEALEVSEPRTEETSKPCTKGISARCLQCVSNARLLEGSEPCAKDTNSWSAGDSDASVVQKSWEEAVLHSKASSGDMASAPCSPAPSGKTVSSVSQDVTELDFETNTFCPPPLYYTHLTQEKTPSARVEITIEPQRNEPEDLDDIFPETKLVSPPLRPVKHTRAAVQESPPVLPNLPQTQGPGEANEAPCPPQIEQSPVNAIRQLPLLNALLIELSLLCNQPVASPTQVHPHLAWLYRGEDKGPDPSTKSTSPSESKSNKLSVRENEKLVNPQSKKNPKGKHPKIGGSPPPKVTKGRLLYGLTNTLRLRLQQTNPNMLVVHEKREQYRRSQIQAVGPKLRIPSWKGKVSSSAAESQMSPQLPADTPTDSNGKLPSLAVQSQLPPQLPGDESLDSIGSFEEGSDTSMQIRAGFDESSTTKEVKQSHAMKQEMVDQSENRTIVTALRAPVSPAGSVTPERSLRSNSFGGNWKNKVPSPGLSLQEPTVDKTVDEGKDGRQVKAISAADTSENRPTSRKSSCESISELLYRDGFTSPCYSEDFCTTENNSRSLPAPDSSTGVEHVQKGSRASKSSEARLSTRKNSSDSSSVLTPPFSAGSPVCSHKRSRALKIHDSLEEASSLSTSDFSSQWTNEKENQADPGSSKVMRKGRDSSTKLKVRAGHKSSEKSQSPRTSQVSSYEPSNLSELELKAIDDSDLADFQEEEDGLGSLRISRQCKDICELVINKLPGYTV.

Disordered regions lie at residues 325–355 (AAVQESPPVLPNLPQTQGPGEANEAPCPPQI), 401–457 (EDKG…VTKG), 504–679 (SWKG…KSSC), and 702–844 (TTEN…SNLS). Residues 407-417 (PSTKSTSPSES) show a composition bias toward low complexity. 2 stretches are compositionally biased toward polar residues: residues 509–520 (VSSSAAESQMSP) and 527–544 (PTDSNGKLPSLAVQSQLP). Basic and acidic residues-rich tracts occupy residues 577–592 (STTKEVKQSHAMKQEM) and 645–658 (TVDKTVDEGKDGRQ). Composition is skewed to polar residues over residues 665–679 (ADTSENRPTSRKSSC), 702–718 (TTENNSRSLPAPDSSTG), 726–749 (SRASKSSEARLSTRKNSSDSSSVL), 776–790 (EASSLSTSDFSSQWT), and 826–844 (KSQSPRTSQVSSYEPSNLS).

In terms of assembly, interacts (via middle region) with microtubules.

It is found in the cytoplasm. It localises to the cytoskeleton. The protein resides in the spindle pole. The protein localises to the microtubule organizing center. Its subcellular location is the centrosome. It is found in the midbody. In terms of biological role, microtubule-associated protein (MAP) that plays a role in the regulation of cell division; promotes microtubule stability and participates in the organization of the spindle midzone and normal progress of cytokinesis. This is Microtubule-associated protein 10 (Map10) from Mus musculus (Mouse).